The primary structure comprises 957 residues: MSIGKVRIYDLSKELNLDNRDLLAICEQLGIAYKSHSSTISDADADRIREAAKTYQPHSASPRKVSKTSPPVKKAPAPQKTQQIVAVHTQPRSETPEAPKPQLQKPPARPQPPQAPTRPTPPAPVAPKPVEPVAAKPPAPPAKPEPTPPRPVPTLVPPPTRPTKKEEKVAATPPPRKELKEPPKKEKGAIAAAKPSSQDRIEIVQRAVPPAPAKPPEMAPKPALPELQPPPKPVRAPNPPKPVTETVEVLDDKSVSKVIKDRHRHKDFDEEESKRKSSRVVKLREEIIDEEEELELTSRLVGVHQVTVDVSQSLQRPPKPKVPRPARPVTPAAKTEKSSEKKQSRHRDRRPEEPAEAPPPDHITIAGPMSVQELATLVRRPEAEIIKTLFFKGIAATINQTLEVETIELVAKELGITVETAEHKVEATKVTEMLESSDLDHLQRRPPVVTIMGHVDHGKTTLLDAIRNAKVAQGEAGGITQHIGAYHVDVEHNGEKHQVVFLDTPGHEAFTAMRARGARVTDIAVLVVAADDGVQPQTIEAISHAKAAKVPIIVAINKIDKESAQPERIKQELTEYGLVPEEWGGDTIMVPVSALQQQNLDTLLEMILLVAEVEDLYANPNRPAKGTVIEAHLDRARGPVATLLVQNGTLRVGDILVAGACFGRVRAMIDDRGQRVEAATPSFAVEVLGLAEVPAAGDEFEVLSDEKAARALAEERAAAQRQSRLAQAAAARRVSLTSLSSQAREGELKELNLILKADVQGSVEAILTALNQLPQDQVQLRVLLAAPGEITETDVDLAAASSAVIIGFNTTLASGARQAAEQHNVDIREYNIIYKLLDDIQGAMEGMLEPELVEEELGQAEVRAIFPLSKGVVAGCYVLNGKLVRNCKVRVLRQQQVIHTGILSSLKRLKDDVREVAAGYECGVRLDDFQQWQEGDIIYAFQTVTKRRSLGSGSDRN.

2 disordered regions span residues 34-282 and 311-367; these read KSHS…RVVK and SQSL…TIAG. Residues 107–161 show a composition bias toward pro residues; it reads PARPQPPQAPTRPTPPAPVAPKPVEPVAAKPPAPPAKPEPTPPRPVPTLVPPPTR. Over residues 163–188 the composition is skewed to basic and acidic residues; sequence TKKEEKVAATPPPRKELKEPPKKEKG. Positions 209-242 are enriched in pro residues; the sequence is PPAPAKPPEMAPKPALPELQPPPKPVRAPNPPKP. 2 stretches are compositionally biased toward basic and acidic residues: residues 250–259 and 266–275; these read LDDKSVSKVI and KDFDEEESKR. One can recognise a tr-type G domain in the interval 444–617; that stretch reads RRPPVVTIMG…LLVAEVEDLY (174 aa). Residues 453–460 are G1; that stretch reads GHVDHGKT. Residue 453-460 coordinates GTP; it reads GHVDHGKT. Residues 478 to 482 form a G2 region; that stretch reads GITQH. Positions 503–506 are G3; it reads DTPG. Residues 503-507 and 557-560 contribute to the GTP site; these read DTPGH and NKID. The tract at residues 557–560 is G4; it reads NKID. Residues 593 to 595 are G5; the sequence is SAL.

It belongs to the TRAFAC class translation factor GTPase superfamily. Classic translation factor GTPase family. IF-2 subfamily.

Its subcellular location is the cytoplasm. In terms of biological role, one of the essential components for the initiation of protein synthesis. Protects formylmethionyl-tRNA from spontaneous hydrolysis and promotes its binding to the 30S ribosomal subunits. Also involved in the hydrolysis of GTP during the formation of the 70S ribosomal complex. In Thermosynechococcus vestitus (strain NIES-2133 / IAM M-273 / BP-1), this protein is Translation initiation factor IF-2.